Consider the following 151-residue polypeptide: UPF0208 membrane protein Spro_3315 (151 aa).

2 helical membrane passes run 46–64 (FAVRFMPPLAVFTLTWQIA) and 70–90 (GPAIATALFACSMPMQGLWWL).

The protein belongs to the UPF0208 family.

It localises to the cell inner membrane. The polypeptide is UPF0208 membrane protein Spro_3315 (Serratia proteamaculans (strain 568)).